The following is a 95-amino-acid chain: DNA-directed RNA polymerase subunit Rpo11 (95 aa).

This sequence belongs to the archaeal Rpo11/eukaryotic RPB11/RPC19 RNA polymerase subunit family. In terms of assembly, part of the RNA polymerase complex.

It localises to the cytoplasm. It carries out the reaction RNA(n) + a ribonucleoside 5'-triphosphate = RNA(n+1) + diphosphate. Functionally, DNA-dependent RNA polymerase (RNAP) catalyzes the transcription of DNA into RNA using the four ribonucleoside triphosphates as substrates. This Pyrococcus furiosus (strain ATCC 43587 / DSM 3638 / JCM 8422 / Vc1) protein is DNA-directed RNA polymerase subunit Rpo11.